The sequence spans 346 residues: NADH-quinone oxidoreductase subunit H (346 aa).

8 helical membrane passes run 6–26 (ILFW…ACAY), 76–96 (IMYL…WSVV), 128–148 (ILFL…AGWA), 166–186 (ISYE…TGSL), 198–218 (LWNI…VAMF), 260–280 (ITMS…PFGI), 289–309 (LFGL…FVWV), and 324–344 (LGWK…SLYI).

The protein belongs to the complex I subunit 1 family. As to quaternary structure, NDH-1 is composed of 14 different subunits. Subunits NuoA, H, J, K, L, M, N constitute the membrane sector of the complex.

The protein resides in the cell inner membrane. The catalysed reaction is a quinone + NADH + 5 H(+)(in) = a quinol + NAD(+) + 4 H(+)(out). Its function is as follows. NDH-1 shuttles electrons from NADH, via FMN and iron-sulfur (Fe-S) centers, to quinones in the respiratory chain. The immediate electron acceptor for the enzyme in this species is believed to be ubiquinone. Couples the redox reaction to proton translocation (for every two electrons transferred, four hydrogen ions are translocated across the cytoplasmic membrane), and thus conserves the redox energy in a proton gradient. This subunit may bind ubiquinone. In Leptospira borgpetersenii serovar Hardjo-bovis (strain JB197), this protein is NADH-quinone oxidoreductase subunit H.